The sequence spans 493 residues: Glutamate--tRNA ligase (493 aa).

The short motif at 10 to 20 (PSPTGTPHVGL) is the 'HIGH' region element. The 'KMSKS' region signature appears at 254–258 (KLSKR). ATP is bound at residue K257.

This sequence belongs to the class-I aminoacyl-tRNA synthetase family. Glutamate--tRNA ligase type 1 subfamily. In terms of assembly, monomer.

The protein localises to the cytoplasm. The catalysed reaction is tRNA(Glu) + L-glutamate + ATP = L-glutamyl-tRNA(Glu) + AMP + diphosphate. In terms of biological role, catalyzes the attachment of glutamate to tRNA(Glu) in a two-step reaction: glutamate is first activated by ATP to form Glu-AMP and then transferred to the acceptor end of tRNA(Glu). The polypeptide is Glutamate--tRNA ligase (Corynebacterium efficiens (strain DSM 44549 / YS-314 / AJ 12310 / JCM 11189 / NBRC 100395)).